Consider the following 331-residue polypeptide: Ornithine carbamoyltransferase (331 aa).

Carbamoyl phosphate contacts are provided by residues 57–60 (STRT), Q82, R106, and 133–136 (HPTQ). Residues N166, D230, and 234 to 235 (SM) each bind L-ornithine. Carbamoyl phosphate-binding positions include 272–273 (CL) and R317.

This sequence belongs to the aspartate/ornithine carbamoyltransferase superfamily. OTCase family.

The protein resides in the cytoplasm. It catalyses the reaction carbamoyl phosphate + L-ornithine = L-citrulline + phosphate + H(+). Its pathway is amino-acid degradation; L-arginine degradation via ADI pathway; carbamoyl phosphate from L-arginine: step 2/2. Functionally, reversibly catalyzes the transfer of the carbamoyl group from carbamoyl phosphate (CP) to the N(epsilon) atom of ornithine (ORN) to produce L-citrulline. In Clostridium perfringens (strain SM101 / Type A), this protein is Ornithine carbamoyltransferase.